The primary structure comprises 350 residues: Hydroxymethylglutaryl-CoA synthase (350 aa).

The active-site Proton donor/acceptor is Glu83. Cys115 acts as the Acyl-thioester intermediate in catalysis. The (3S)-3-hydroxy-3-methylglutaryl-CoA site is built by Cys115 and Thr156. Arg204 contributes to the CoA binding site. Residues Thr206 and His239 each contribute to the (3S)-3-hydroxy-3-methylglutaryl-CoA site. His239 acts as the Proton donor/acceptor in catalysis. CoA is bound at residue Lys244. Asn271 and Ser301 together coordinate (3S)-3-hydroxy-3-methylglutaryl-CoA.

The protein belongs to the thiolase-like superfamily. Archaeal HMG-CoA synthase family. Interacts with acetoacetyl-CoA thiolase that catalyzes the precedent step in the pathway and with a DUF35 protein. The acetoacetyl-CoA thiolase/HMG-CoA synthase complex channels the intermediate via a fused CoA-binding site, which allows for efficient coupling of the endergonic thiolase reaction with the exergonic HMGCS reaction.

The enzyme catalyses acetoacetyl-CoA + acetyl-CoA + H2O = (3S)-3-hydroxy-3-methylglutaryl-CoA + CoA + H(+). It functions in the pathway metabolic intermediate biosynthesis; (R)-mevalonate biosynthesis; (R)-mevalonate from acetyl-CoA: step 2/3. Functionally, catalyzes the condensation of acetyl-CoA with acetoacetyl-CoA to form 3-hydroxy-3-methylglutaryl-CoA (HMG-CoA). Functions in the mevalonate (MVA) pathway leading to isopentenyl diphosphate (IPP), a key precursor for the biosynthesis of isoprenoid compounds that are building blocks of archaeal membrane lipids. In Pyrococcus horikoshii (strain ATCC 700860 / DSM 12428 / JCM 9974 / NBRC 100139 / OT-3), this protein is Hydroxymethylglutaryl-CoA synthase.